A 268-amino-acid chain; its full sequence is MATMIETPYEDLLRRVLEEGAPKGDRTGTGTLSLFGAQLRYNLAESFPLLTTKKVYFHGVIGELLWFLRGDSNVKWLQENKVRIWNEWADEDGELGPVYGVQWRSWPTPDGQHIDQIQVALDTLKNNPDSRRNLVSAWNVSELDKMALMPCHLLFQLYVADGKLSMQVYQRSADMFLGVPFNLASYAALTHMFAQQAGLEVGELIWTGGDCHIYNDHIEQVKEQLSRQPREYPQLKLHKAESLFDYDFDDFEVIGYDPHPTIKAQVSV.

DUMP-binding positions include Arg26 and 131 to 132; that span reads RR. The active-site Nucleophile is the Cys151. DUMP is bound by residues 171–174, Asn182, and 212–214; these read RSAD and HIY. Asp174 lines the (6R)-5,10-methylene-5,6,7,8-tetrahydrofolate pocket. A (6R)-5,10-methylene-5,6,7,8-tetrahydrofolate-binding site is contributed by Ser267.

It belongs to the thymidylate synthase family. Bacterial-type ThyA subfamily. Homodimer.

Its subcellular location is the cytoplasm. It carries out the reaction dUMP + (6R)-5,10-methylene-5,6,7,8-tetrahydrofolate = 7,8-dihydrofolate + dTMP. Its pathway is pyrimidine metabolism; dTTP biosynthesis. Catalyzes the reductive methylation of 2'-deoxyuridine-5'-monophosphate (dUMP) to 2'-deoxythymidine-5'-monophosphate (dTMP) while utilizing 5,10-methylenetetrahydrofolate (mTHF) as the methyl donor and reductant in the reaction, yielding dihydrofolate (DHF) as a by-product. This enzymatic reaction provides an intracellular de novo source of dTMP, an essential precursor for DNA biosynthesis. The protein is Thymidylate synthase of Corynebacterium aurimucosum (strain ATCC 700975 / DSM 44827 / CIP 107346 / CN-1) (Corynebacterium nigricans).